The chain runs to 176 residues: NAD(P)H-quinone oxidoreductase subunit 6, chloroplastic (176 aa).

Helical transmembrane passes span 10–30 (ILML…VLLT), 33–53 (IYSA…YFLL), 60–80 (VAQL…AVMF), 95–115 (IGDG…MTTI), and 152–172 (FYLP…GAIT).

Belongs to the complex I subunit 6 family. NDH is composed of at least 16 different subunits, 5 of which are encoded in the nucleus.

The protein localises to the plastid. It is found in the chloroplast thylakoid membrane. It carries out the reaction a plastoquinone + NADH + (n+1) H(+)(in) = a plastoquinol + NAD(+) + n H(+)(out). The catalysed reaction is a plastoquinone + NADPH + (n+1) H(+)(in) = a plastoquinol + NADP(+) + n H(+)(out). In terms of biological role, NDH shuttles electrons from NAD(P)H:plastoquinone, via FMN and iron-sulfur (Fe-S) centers, to quinones in the photosynthetic chain and possibly in a chloroplast respiratory chain. The immediate electron acceptor for the enzyme in this species is believed to be plastoquinone. Couples the redox reaction to proton translocation, and thus conserves the redox energy in a proton gradient. In Lolium perenne (Perennial ryegrass), this protein is NAD(P)H-quinone oxidoreductase subunit 6, chloroplastic (ndhG).